The primary structure comprises 709 residues: Kelch-like protein 11 (709 aa).

The first 15 residues, 1–15, serve as a signal peptide directing secretion; sequence MAAAVAAAAAAAAAA. Positions 95-171 constitute a BTB domain; the sequence is CDITLCFGGA…MYTGRIRVST (77 aa). A BACK domain is found at 206 to 308; that stretch reads CVAIHSLAHM…KPTYLTRHVK (103 aa). Kelch repeat units follow at residues 361–408, 409–454, 456–502, 504–557, and 611–662; these read VIMV…ITES, YVYV…EVKG, LYSI…AIED, FVYI…VVNS, and DVFI…HVRI. Position 466 is a phosphoserine (S466).

As to quaternary structure, homodimer. Interacts with CUL3. Component of a cullin-RING-based BCR (BTB-CUL3-RBX1) E3 ubiquitin-protein ligase complex.

Component of a cullin-RING-based BCR (BTB-CUL3-RBX1) E3 ubiquitin-protein ligase complex that mediates the ubiquitination of target proteins, leading most often to their proteasomal degradation. This Mus musculus (Mouse) protein is Kelch-like protein 11 (Klhl11).